The chain runs to 327 residues: 2-oxoisovalerate dehydrogenase subunit beta (327 aa).

Residues E29, 58–60, Q82, and 86–89 each bind thiamine diphosphate; these read LAE and FIMP. Residues 83-86 and H129 contribute to the substrate site; that span reads FADF. H129 functions as the Proton acceptor in the catalytic mechanism.

As to quaternary structure, heterotetramer of two alpha and two beta chains. Directly associated with ODBA in the E1 complex. Thiamine diphosphate is required as a cofactor.

It catalyses the reaction N(6)-[(R)-lipoyl]-L-lysyl-[protein] + 3-methyl-2-oxobutanoate + H(+) = N(6)-[(R)-S(8)-2-methylpropanoyldihydrolipoyl]-L-lysyl-[protein] + CO2. In terms of biological role, the branched-chain alpha-keto dehydrogenase complex catalyzes the overall conversion of alpha-keto acids to acyl-CoA and CO(2). It contains multiple copies of three enzymatic components: branched-chain alpha-keto acid decarboxylase (E1), lipoamide acyltransferase (E2) and lipoamide dehydrogenase (E3). In Bacillus subtilis (strain 168), this protein is 2-oxoisovalerate dehydrogenase subunit beta (bfmBAB).